A 416-amino-acid chain; its full sequence is Lipoyl synthase, mitochondrial (416 aa).

The transit peptide at 1 to 33 directs the protein to the mitochondrion; sequence MAAPTRSLRRLSSFRTTISPSLTVTAPIGCRSY. Residues C132, C137, C143, C163, C167, C170, and S378 each coordinate [4Fe-4S] cluster. In terms of domain architecture, Radical SAM core spans 148-367; it reads DKSSATATIM…RQRALDMGFL (220 aa). Positions 396–416 are disordered; that stretch reads GSGTAERTVDQTAATTDEATR. Positions 405 to 416 are enriched in polar residues; the sequence is DQTAATTDEATR.

This sequence belongs to the radical SAM superfamily. Lipoyl synthase family. The cofactor is [4Fe-4S] cluster.

The protein localises to the mitochondrion. The catalysed reaction is [[Fe-S] cluster scaffold protein carrying a second [4Fe-4S](2+) cluster] + N(6)-octanoyl-L-lysyl-[protein] + 2 oxidized [2Fe-2S]-[ferredoxin] + 2 S-adenosyl-L-methionine + 4 H(+) = [[Fe-S] cluster scaffold protein] + N(6)-[(R)-dihydrolipoyl]-L-lysyl-[protein] + 4 Fe(3+) + 2 hydrogen sulfide + 2 5'-deoxyadenosine + 2 L-methionine + 2 reduced [2Fe-2S]-[ferredoxin]. Its pathway is protein modification; protein lipoylation via endogenous pathway; protein N(6)-(lipoyl)lysine from octanoyl-[acyl-carrier-protein]: step 2/2. Catalyzes the radical-mediated insertion of two sulfur atoms into the C-6 and C-8 positions of the octanoyl moiety bound to the lipoyl domains of lipoate-dependent enzymes, thereby converting the octanoylated domains into lipoylated derivatives. This Penicillium rubens (strain ATCC 28089 / DSM 1075 / NRRL 1951 / Wisconsin 54-1255) (Penicillium chrysogenum) protein is Lipoyl synthase, mitochondrial.